The following is a 529-amino-acid chain: Peptide chain release factor 3 (529 aa).

In terms of domain architecture, tr-type G spans alanine 10–glutamine 278. GTP is bound by residues serine 19–threonine 26, aspartate 87–histidine 91, and asparagine 141–aspartate 144.

Belongs to the TRAFAC class translation factor GTPase superfamily. Classic translation factor GTPase family. PrfC subfamily.

The protein resides in the cytoplasm. Functionally, increases the formation of ribosomal termination complexes and stimulates activities of RF-1 and RF-2. It binds guanine nucleotides and has strong preference for UGA stop codons. It may interact directly with the ribosome. The stimulation of RF-1 and RF-2 is significantly reduced by GTP and GDP, but not by GMP. This is Peptide chain release factor 3 from Nitratidesulfovibrio vulgaris (strain DSM 19637 / Miyazaki F) (Desulfovibrio vulgaris).